Here is a 353-residue protein sequence, read N- to C-terminus: Tetraacyldisaccharide 4'-kinase (353 aa).

Position 66-73 (66-73) interacts with ATP; the sequence is TVGGTGKT.

Belongs to the LpxK family.

It catalyses the reaction a lipid A disaccharide + ATP = a lipid IVA + ADP + H(+). It participates in glycolipid biosynthesis; lipid IV(A) biosynthesis; lipid IV(A) from (3R)-3-hydroxytetradecanoyl-[acyl-carrier-protein] and UDP-N-acetyl-alpha-D-glucosamine: step 6/6. Functionally, transfers the gamma-phosphate of ATP to the 4'-position of a tetraacyldisaccharide 1-phosphate intermediate (termed DS-1-P) to form tetraacyldisaccharide 1,4'-bis-phosphate (lipid IVA). This Geobacter sulfurreducens (strain ATCC 51573 / DSM 12127 / PCA) protein is Tetraacyldisaccharide 4'-kinase.